A 95-amino-acid chain; its full sequence is Large ribosomal subunit protein bL25 (95 aa).

The protein belongs to the bacterial ribosomal protein bL25 family. As to quaternary structure, part of the 50S ribosomal subunit; part of the 5S rRNA/L5/L18/L25 subcomplex. Contacts the 5S rRNA. Binds to the 5S rRNA independently of L5 and L18.

Its function is as follows. This is one of the proteins that binds to the 5S RNA in the ribosome where it forms part of the central protuberance. This chain is Large ribosomal subunit protein bL25, found in Yersinia enterocolitica serotype O:8 / biotype 1B (strain NCTC 13174 / 8081).